The sequence spans 471 residues: Chromosomal replication initiator protein DnaA (471 aa).

A domain I, interacts with DnaA modulators region spans residues 1–91 (MVDVSETTER…KYWQDESDAV (91 aa)). The tract at residues 91 to 133 (VYSVDICVSDGVGVQPQMAEHPDGAVDGPPVVMVGGTYDHLSS) is domain II. Positions 134–352 (PLDPRFTFDN…GALNKVVAHS (219 aa)) are domain III, AAA+ region. G180, G182, K183, and T184 together coordinate ATP. The domain IV, binds dsDNA stretch occupies residues 353-471 (SLVGRSVTIE…DINLLIRMLR (119 aa)).

Belongs to the DnaA family. In terms of assembly, oligomerizes as a right-handed, spiral filament on DNA at oriC.

It is found in the cytoplasm. Functionally, plays an essential role in the initiation and regulation of chromosomal replication. ATP-DnaA binds to the origin of replication (oriC) to initiate formation of the DNA replication initiation complex once per cell cycle. Binds the DnaA box (a 9 base pair repeat at the origin) and separates the double-stranded (ds)DNA. Forms a right-handed helical filament on oriC DNA; dsDNA binds to the exterior of the filament while single-stranded (ss)DNA is stabiized in the filament's interior. The ATP-DnaA-oriC complex binds and stabilizes one strand of the AT-rich DNA unwinding element (DUE), permitting loading of DNA polymerase. After initiation quickly degrades to an ADP-DnaA complex that is not apt for DNA replication. Binds acidic phospholipids. In Anaplasma marginale (strain St. Maries), this protein is Chromosomal replication initiator protein DnaA.